Here is a 174-residue protein sequence, read N- to C-terminus: NADH-quinone oxidoreductase subunit B 2 (174 aa).

Positions 38, 39, 104, and 133 each coordinate [4Fe-4S] cluster.

The protein belongs to the complex I 20 kDa subunit family. As to quaternary structure, NDH-1 is composed of 14 different subunits. Subunits NuoB, C, D, E, F, and G constitute the peripheral sector of the complex. [4Fe-4S] cluster is required as a cofactor.

It localises to the cell membrane. The enzyme catalyses a quinone + NADH + 5 H(+)(in) = a quinol + NAD(+) + 4 H(+)(out). In terms of biological role, NDH-1 shuttles electrons from NADH, via FMN and iron-sulfur (Fe-S) centers, to quinones in the respiratory chain. The immediate electron acceptor for the enzyme in this species is believed to be ubiquinone. Couples the redox reaction to proton translocation (for every two electrons transferred, four hydrogen ions are translocated across the cytoplasmic membrane), and thus conserves the redox energy in a proton gradient. This chain is NADH-quinone oxidoreductase subunit B 2, found in Chloroflexus aurantiacus (strain ATCC 29366 / DSM 635 / J-10-fl).